The sequence spans 398 residues: Keratinocyte differentiation factor 1 (398 aa).

Disordered regions lie at residues 1–60 (MPRP…SITF) and 123–156 (AEANWAKEHNGVPPSPDRAPPSRRDGQRLKSTMG). Residues 44–55 (RPDPKDPGHHGP) are compositionally biased toward basic and acidic residues. The residue at position 218 (Ser218) is a Phosphoserine. 2 disordered regions span residues 307-340 (RKSRARPQTSEGRSTRAAAPTAAAPDSGHETMVG) and 369-392 (GAPGYPASHDSSFQGTDTDSSGAP). The segment covering 377 to 389 (HDSSFQGTDTDSS) has biased composition (polar residues).

The protein resides in the cytoplasm. Its subcellular location is the cell junction. Plays a role in the regulation of the epidermis formation during early development. Required both as an inhibitor of basal cell proliferation and a promoter of differentiation of basal progenitor cell progeny. This chain is Keratinocyte differentiation factor 1 (KDF1), found in Homo sapiens (Human).